The chain runs to 180 residues: Glycoprotein Xg (180 aa).

Residues 1-21 (MESWWGLPCLAFLCFLMHARG) form the signal peptide. The Extracellular portion of the chain corresponds to 22–142 (QRDFDLADAL…GNPEGNMVAK (121 aa)). Residues 28–133 (ADALDDPEPT…HGGDHHSTYG (106 aa)) are disordered. Residues 47–57 (KPKPPYYPQPE) are compositionally biased toward pro residues. A helical transmembrane segment spans residues 143–163 (IVSPIVSVVVVTLLGAAASYF). The Cytoplasmic segment spans residues 164 to 180 (KLNNRRNCFRTHEPENV).

This sequence belongs to the CD99 family. Post-translationally, O-glycosylated. Expressed in erythroid tissues, including thymus, bone marrow and fetal liver, and in several nonerythroid tissues, such as heart, placenta, skeletal muscle, thyroid and trachea, as well as in skin fibroblasts. Expression is low or undetectable in other tissues.

It localises to the cell membrane. The protein is Glycoprotein Xg (XG) of Homo sapiens (Human).